We begin with the raw amino-acid sequence, 1235 residues long: ATP-dependent helicase/nuclease subunit A (1235 aa).

One can recognise a UvrD-like helicase ATP-binding domain in the interval 10-482 (SIWTDDQWSA…IDLNQNFRSR (473 aa)). ATP is bound at residue 31–38 (AAAGSGKT). Residues 509-799 (QAALKLGASY…RLMTIHSSKG (291 aa)) form the UvrD-like helicase C-terminal domain.

This sequence belongs to the helicase family. AddA subfamily. Heterodimer of AddA and AddB/RexB. Requires Mg(2+) as cofactor.

It carries out the reaction Couples ATP hydrolysis with the unwinding of duplex DNA by translocating in the 3'-5' direction.. The enzyme catalyses ATP + H2O = ADP + phosphate + H(+). The heterodimer acts as both an ATP-dependent DNA helicase and an ATP-dependent, dual-direction single-stranded exonuclease. Recognizes the chi site generating a DNA molecule suitable for the initiation of homologous recombination. The AddA nuclease domain is required for chi fragment generation; this subunit has the helicase and 3' -&gt; 5' nuclease activities. The protein is ATP-dependent helicase/nuclease subunit A of Bacillus velezensis (strain DSM 23117 / BGSC 10A6 / LMG 26770 / FZB42) (Bacillus amyloliquefaciens subsp. plantarum).